Reading from the N-terminus, the 70-residue chain is Neuropeptide SIFamide (70 aa).

The N-terminal stretch at 1-22 (MRFIVALCLFAIVMCIIHKAEG) is a signal peptide. F34 is modified (phenylalanine amide). The propeptide occupies 38-70 (GVVEYDTTGRALSALCEIASETCQAWYQTLENK).

Expressed in antennal lobe (AL) and gnathal ganglion (GNG) with expression detected in most animals (at protein level). Not expressed in corpora cardiaca (CC) and corpora allata (CA) (at protein level).

It localises to the secreted. Its function is as follows. Ligand for the neuropeptide SIFamide receptor. This Agrotis ipsilon (Black cutworm moth) protein is Neuropeptide SIFamide.